The sequence spans 566 residues: Putative ABC transporter ATP-binding protein BC_2655 (566 aa).

2 consecutive ABC transporter domains span residues 5 to 246 (ISFE…GLRE) and 300 to 533 (LKVE…ANLR). ATP-binding positions include 39-46 (GRSGSGKS) and 333-340 (GHNGAGKS).

The protein belongs to the ABC transporter superfamily.

It localises to the cell membrane. Probably part of an ABC transporter complex. Responsible for energy coupling to the transport system. The sequence is that of Putative ABC transporter ATP-binding protein BC_2655 from Bacillus cereus (strain ATCC 14579 / DSM 31 / CCUG 7414 / JCM 2152 / NBRC 15305 / NCIMB 9373 / NCTC 2599 / NRRL B-3711).